The chain runs to 582 residues: Poly(A) RNA polymerase, mitochondrial (582 aa).

The N-terminal 37 residues, 1–37 (MAVPGVGLLTRLNLCARRRTRVQRPIVRLLSCPGTVA), are a transit peptide targeting the mitochondrion. Residue lysine 90 is modified to N6-acetyllysine. Residues 107-109 (YES) and 241-242 (GC) each bind ATP. 2 residues coordinate Mg(2+): aspartate 243 and aspartate 245. One can recognise a PAP-associated domain in the interval 437-483 (LELLLKEFFEYFGNFAFDKNSINIRQGREQNKPDSSPLYIQNPFETS).

Belongs to the DNA polymerase type-B-like family. Homodimer. Mg(2+) is required as a cofactor. The cofactor is Mn(2+). Ubiquitous, with stronger expression in tissues with high energy requirements: heart, brain, and skeletal muscle.

The protein resides in the cytoplasm. The protein localises to the mitochondrion. The catalysed reaction is RNA(n) + ATP = RNA(n)-3'-adenine ribonucleotide + diphosphate. Its function is as follows. Polymerase that creates the 3' poly(A) tail of mitochondrial transcripts. Can use all four nucleotides, but has higher activity with ATP and UTP (in vitro). Plays a role in replication-dependent histone mRNA degradation. May be involved in the terminal uridylation of mature histone mRNAs before their degradation is initiated. Might be responsible for the creation of some UAA stop codons which are not encoded in mtDNA. The sequence is that of Poly(A) RNA polymerase, mitochondrial (MTPAP) from Homo sapiens (Human).